The following is a 183-amino-acid chain: Pyruvoyl-dependent arginine decarboxylase (183 aa).

S44 is modified (pyruvic acid (Ser)).

This sequence belongs to the PdaD family. Pyruvate serves as cofactor.

The enzyme catalyses L-arginine + H(+) = agmatine + CO2. In Nitrosopumilus maritimus (strain SCM1), this protein is Pyruvoyl-dependent arginine decarboxylase.